A 763-amino-acid polypeptide reads, in one-letter code: 1,4-alpha-glucan branching enzyme GlgB (763 aa).

D437 serves as the catalytic Nucleophile. Residue E488 is the Proton donor of the active site.

The protein belongs to the glycosyl hydrolase 13 family. GlgB subfamily. In terms of assembly, monomer.

It carries out the reaction Transfers a segment of a (1-&gt;4)-alpha-D-glucan chain to a primary hydroxy group in a similar glucan chain.. It functions in the pathway glycan biosynthesis; glycogen biosynthesis. In terms of biological role, catalyzes the formation of the alpha-1,6-glucosidic linkages in glycogen by scission of a 1,4-alpha-linked oligosaccharide from growing alpha-1,4-glucan chains and the subsequent attachment of the oligosaccharide to the alpha-1,6 position. The polypeptide is 1,4-alpha-glucan branching enzyme GlgB (Synechococcus sp. (strain JA-2-3B'a(2-13)) (Cyanobacteria bacterium Yellowstone B-Prime)).